The primary structure comprises 498 residues: Glutathione hydrolase 6 (498 aa).

Residues 1 to 49 (MDATTGAVLYQKLQLWEPGMESEEEEEEEEIAEPLVLSLRRLQNTPGNK) are Cytoplasmic-facing. The helical; Signal-anchor for type II membrane protein transmembrane segment at 50 to 70 (VGGLPGAWTRLLAGLLLLAVS) threads the bilayer. At 71 to 498 (SSLALRQLQG…PSGCCPFQGY (428 aa)) the chain is on the extracellular side. N162, N167, and N376 each carry an N-linked (GlcNAc...) asparagine glycan.

The protein belongs to the gamma-glutamyltransferase family. In terms of assembly, heterodimer composed of the light and heavy chains. The active site is located in the light chain. Post-translationally, cleaved by autocatalysis into a large and a small subunit and the autocatalytic cleavage is essential to the functional activation of the enzyme.

The protein resides in the membrane. The enzyme catalyses an N-terminal (5-L-glutamyl)-[peptide] + an alpha-amino acid = 5-L-glutamyl amino acid + an N-terminal L-alpha-aminoacyl-[peptide]. The catalysed reaction is glutathione + H2O = L-cysteinylglycine + L-glutamate. It carries out the reaction an S-substituted glutathione + H2O = an S-substituted L-cysteinylglycine + L-glutamate. It functions in the pathway sulfur metabolism; glutathione metabolism. In terms of biological role, hydrolyzes and transfers gamma-glutamyl moieties from glutathione and other gamma-glutamyl compounds to acceptors. The polypeptide is Glutathione hydrolase 6 (Rattus norvegicus (Rat)).